A 61-amino-acid polypeptide reads, in one-letter code: Large ribosomal subunit protein uL29 (61 aa).

Belongs to the universal ribosomal protein uL29 family.

The polypeptide is Large ribosomal subunit protein uL29 (Stenotrophomonas maltophilia (strain R551-3)).